The sequence spans 118 residues: UPF0329 protein ECU03_0030/ECU05_0040/ECU06_0010/ECU06_1710/ECU11_0010 (118 aa).

This sequence belongs to the UPF0329 family.

This Encephalitozoon cuniculi (strain GB-M1) (Microsporidian parasite) protein is UPF0329 protein ECU03_0030/ECU05_0040/ECU06_0010/ECU06_1710/ECU11_0010.